The following is a 265-amino-acid chain: Cytochrome c oxidase subunit 3 (265 aa).

Transmembrane regions (helical) follow at residues 16–36 (PWPI…VMYM), 41–61 (GGAT…FVWW), 84–104 (YGSI…FWAS), 162–182 (AVYA…FQGM), 200–220 (FFLA…FLIV), and 245–265 (WHFV…WGGI).

The protein belongs to the cytochrome c oxidase subunit 3 family. As to quaternary structure, component of the cytochrome c oxidase (complex IV, CIV), a multisubunit enzyme composed of a catalytic core of 3 subunits and several supernumerary subunits. The complex exists as a monomer or a dimer and forms supercomplexes (SCs) in the inner mitochondrial membrane with ubiquinol-cytochrome c oxidoreductase (cytochrome b-c1 complex, complex III, CIII).

The protein localises to the mitochondrion inner membrane. It carries out the reaction 4 Fe(II)-[cytochrome c] + O2 + 8 H(+)(in) = 4 Fe(III)-[cytochrome c] + 2 H2O + 4 H(+)(out). In terms of biological role, component of the cytochrome c oxidase, the last enzyme in the mitochondrial electron transport chain which drives oxidative phosphorylation. The respiratory chain contains 3 multisubunit complexes succinate dehydrogenase (complex II, CII), ubiquinol-cytochrome c oxidoreductase (cytochrome b-c1 complex, complex III, CIII) and cytochrome c oxidase (complex IV, CIV), that cooperate to transfer electrons derived from NADH and succinate to molecular oxygen, creating an electrochemical gradient over the inner membrane that drives transmembrane transport and the ATP synthase. Cytochrome c oxidase is the component of the respiratory chain that catalyzes the reduction of oxygen to water. Electrons originating from reduced cytochrome c in the intermembrane space (IMS) are transferred via the dinuclear copper A center (CU(A)) of subunit 2 and heme A of subunit 1 to the active site in subunit 1, a binuclear center (BNC) formed by heme A3 and copper B (CU(B)). The BNC reduces molecular oxygen to 2 water molecules using 4 electrons from cytochrome c in the IMS and 4 protons from the mitochondrial matrix. This chain is Cytochrome c oxidase subunit 3 (COX3), found in Aegilops columnaris (Goatgrass).